A 214-amino-acid chain; its full sequence is uncharacterized protein (214 aa).

A signal peptide spans 1-17; it reads MWCFIVFLTIFLPTLEG. 2 N-linked (GlcNAc...) asparagine glycosylation sites follow: N88 and N139.

In terms of tissue distribution, component of the acid-insoluble organic matrix of calcified layers of the shell (at protein level).

Its subcellular location is the secreted. This is an uncharacterized protein from Lottia gigantea (Giant owl limpet).